The chain runs to 482 residues: Proline--tRNA ligase (482 aa).

3 residues coordinate L-proline: T117, E119, and R148. ATP-binding residues include R148, E150, Q232, and T235. Residue H237 coordinates L-proline. An ATP-binding site is contributed by S269. The tract at residues 346–376 (EMRGVPLRVEIGPRDLEKGAAVISRRDTGEK) is interaction with tRNA. Zn(2+) contacts are provided by C436, C441, C464, and C467.

Belongs to the class-II aminoacyl-tRNA synthetase family. ProS type 3 subfamily. Homodimer. The dimer is functionally asymmetric: only one of the two active sites at a time is able to form prolyl-adenylate, and only one tRNA molecule binds per dimer. Interacts with LeuRS, which enhances tRNA(Pro) aminoacylation.

Its subcellular location is the cytoplasm. It catalyses the reaction tRNA(Pro) + L-proline + ATP = L-prolyl-tRNA(Pro) + AMP + diphosphate. In terms of biological role, catalyzes the attachment of proline to tRNA(Pro) in a two-step reaction: proline is first activated by ATP to form Pro-AMP and then transferred to the acceptor end of tRNA(Pro). Can inadvertently accommodate and process cysteine. In Methanothermobacter thermautotrophicus (strain ATCC 29096 / DSM 1053 / JCM 10044 / NBRC 100330 / Delta H) (Methanobacterium thermoautotrophicum), this protein is Proline--tRNA ligase (proS).